We begin with the raw amino-acid sequence, 218 residues long: MLGFLEKVADYTKEAVSAAKYLVDGLGVTFDHMRRRPVTVQYPYEKLIPSERYRGRIHYEFDKCIACEVCVRVCPINLPVVDWVMNKETKKKELRNYSIDFGACIFCGNCVEYCPTNCLSMTEEYELSAFDRHSLNYDNVALGRLPTSVTSDPSVRPLRELPYLPKGIMDPHELPANQLRAGKLPSQIIKELQADKSEEEGKNNSSDMVPNKLNSTNK.

4Fe-4S ferredoxin-type domains are found at residues Gly-55–Val-84 and Arg-95–Glu-124. Cys-64, Cys-67, Cys-70, Cys-74, Cys-104, Cys-107, Cys-110, and Cys-114 together coordinate [4Fe-4S] cluster. The segment at Leu-179–Lys-218 is disordered. Residues Leu-192–Lys-202 show a composition bias toward basic and acidic residues. Polar residues predominate over residues Asn-203 to Lys-218.

This sequence belongs to the complex I 23 kDa subunit family. NDH-1 is composed of at least 11 different subunits. [4Fe-4S] cluster is required as a cofactor.

It is found in the cellular thylakoid membrane. It carries out the reaction a plastoquinone + NADH + (n+1) H(+)(in) = a plastoquinol + NAD(+) + n H(+)(out). The enzyme catalyses a plastoquinone + NADPH + (n+1) H(+)(in) = a plastoquinol + NADP(+) + n H(+)(out). Its function is as follows. NDH-1 shuttles electrons from an unknown electron donor, via FMN and iron-sulfur (Fe-S) centers, to quinones in the respiratory and/or the photosynthetic chain. The immediate electron acceptor for the enzyme in this species is believed to be plastoquinone. Couples the redox reaction to proton translocation, and thus conserves the redox energy in a proton gradient. This chain is NAD(P)H-quinone oxidoreductase subunit I, found in Prochlorococcus marinus (strain NATL2A).